The primary structure comprises 197 residues: Protein jagunal (197 aa).

Residues 1 to 39 lie on the Cytoplasmic side of the membrane; sequence MATRGGPMVAGTDGNDFEFRQRVAGTYQISLLNKSRLKY. Residues 40–60 form a helical membrane-spanning segment; it reads CIFFHALLFFVMLAKLTSDIL. Over 61–78 the chain is Lumenal; that stretch reads DHLDIFVLEIEELEVPPP. A helical membrane pass occupies residues 79–99; the sequence is LWWEYVWAASLLTSFLGLSAA. Over 100–109 the chain is Cytoplasmic; the sequence is RGNKVREMQK. A helical membrane pass occupies residues 110–130; the sequence is YMVAILLFAILPLFYCFAYYF. The Lumenal segment spans residues 131–159; it reads SDVWEFATLDKSVELDETDIFVWRGYPYG. The chain crosses the membrane as a helical span at residues 160-180; it reads VFWYAFCFVGFQVHGFTLYFA. The Cytoplasmic segment spans residues 181–197; that stretch reads YNLVKAWKARTATRKFQ.

It belongs to the jagunal family.

It is found in the endoplasmic reticulum membrane. Functionally, required for endoplasmic reticulum organization and proper vesicular traffic during vitellogenesis. Required for oocyte and bristle growth. The polypeptide is Protein jagunal (Drosophila melanogaster (Fruit fly)).